A 278-amino-acid chain; its full sequence is Purine nucleoside phosphorylase YlmD (278 aa).

Positions 87, 132, and 149 each coordinate Zn(2+).

This sequence belongs to the purine nucleoside phosphorylase YfiH/LACC1 family. In terms of assembly, homodimer. Cu(2+) serves as cofactor. It depends on Zn(2+) as a cofactor.

It carries out the reaction adenosine + phosphate = alpha-D-ribose 1-phosphate + adenine. The catalysed reaction is S-methyl-5'-thioadenosine + phosphate = 5-(methylsulfanyl)-alpha-D-ribose 1-phosphate + adenine. The enzyme catalyses inosine + phosphate = alpha-D-ribose 1-phosphate + hypoxanthine. It catalyses the reaction adenosine + H2O + H(+) = inosine + NH4(+). Its function is as follows. Purine nucleoside enzyme that catalyzes the phosphorolysis of adenosine and inosine nucleosides, yielding D-ribose 1-phosphate and the respective free bases, adenine and hypoxanthine. Also catalyzes the phosphorolysis of S-methyl-5'-thioadenosine into adenine and S-methyl-5-thio-alpha-D-ribose 1-phosphate. Also has adenosine deaminase activity. This is Purine nucleoside phosphorylase YlmD (ylmD) from Bacillus subtilis (strain 168).